Reading from the N-terminus, the 192-residue chain is uncharacterized protein (192 aa).

Disordered stretches follow at residues 1–37 (MASS…PAFP) and 146–192 (ARGP…EQNK). Pro residues-rich tracts occupy residues 8 to 19 (TPSPAGLPPPSV) and 159 to 180 (APPP…PGWP).

This is an uncharacterized protein from Homo sapiens (Human).